Consider the following 91-residue polypeptide: Large ribosomal subunit protein bL27 (91 aa).

Residues 1–20 are disordered; the sequence is MAHKKGVGSSKNGRDSNPKY.

It belongs to the bacterial ribosomal protein bL27 family.

In Deinococcus geothermalis (strain DSM 11300 / CIP 105573 / AG-3a), this protein is Large ribosomal subunit protein bL27.